We begin with the raw amino-acid sequence, 2197 residues long: uncharacterized protein (2197 aa).

Ser-2 is subject to N-acetylserine. The stretch at 2159–2195 (TIPFLAELLEDVELSVKSLAQDIIKQMEEMSGESLAE) is one HEAT repeat.

Belongs to the HEATR1/UTP10 family.

It is found in the nucleus. The protein localises to the nucleolus. In terms of biological role, involved in nucleolar processing of pre-18S ribosomal RNA. Involved in ribosome biosynthesis. This is an uncharacterized protein from Arabidopsis thaliana (Mouse-ear cress).